Reading from the N-terminus, the 106-residue chain is Putative double-stranded DNA mimic protein VCM66_1163 (106 aa).

This sequence belongs to the putative dsDNA mimic protein family.

In terms of biological role, may act as a double-stranded DNA (dsDNA) mimic. Probably regulates the activity of a dsDNA-binding protein. The polypeptide is Putative double-stranded DNA mimic protein VCM66_1163 (Vibrio cholerae serotype O1 (strain M66-2)).